A 439-amino-acid chain; its full sequence is Putative FBD-associated F-box protein At1g05080 (439 aa).

The F-box domain occupies E12–T58. Residues S360–L410 enclose the FBD domain.

The polypeptide is Putative FBD-associated F-box protein At1g05080 (Arabidopsis thaliana (Mouse-ear cress)).